The primary structure comprises 84 residues: Small ribosomal subunit protein bS16 (84 aa).

The protein belongs to the bacterial ribosomal protein bS16 family.

This Burkholderia mallei (strain NCTC 10247) protein is Small ribosomal subunit protein bS16.